The sequence spans 328 residues: MKLWMESHLIVPETRPSPRMMSNQTLVTEFILQGFSEHPEYRVFLFSCFLFLYSGALTGNVLITLAITFNPGLHAPMYFFLLNLATMDIICTSSIMPKALASLVSEESSISYGGCMAQLYFLTWAASSELLLLTVMAYDRYAAICHPLHYSSMMSKVFCSGLATAVWLLCAVNTAIHTGLMLRLDFCGPNVIIHFFCEVPPLLLLSCSSTYVNGVMIVLADAFYGIVNFLMTIASYGFIVSSILKVKTAWGRQKAFSTCSSHLTVVCMYYTAVFYAYISPVSGYSAGKSKLAGLLYTVLSPTLNPLIYTLRNKEVKAALRKLFPFFRN.

Topologically, residues 1–43 are extracellular; the sequence is MKLWMESHLIVPETRPSPRMMSNQTLVTEFILQGFSEHPEYRV. Asn23 is a glycosylation site (N-linked (GlcNAc...) asparagine). The helical transmembrane segment at 44-64 threads the bilayer; sequence FLFSCFLFLYSGALTGNVLIT. At 65-72 the chain is on the cytoplasmic side; sequence LAITFNPG. The helical transmembrane segment at 73-93 threads the bilayer; it reads LHAPMYFFLLNLATMDIICTS. Topologically, residues 94-117 are extracellular; the sequence is SIMPKALASLVSEESSISYGGCMA. A disulfide bridge connects residues Cys115 and Cys207. A helical membrane pass occupies residues 118-138; sequence QLYFLTWAASSELLLLTVMAY. Over 139–157 the chain is Cytoplasmic; that stretch reads DRYAAICHPLHYSSMMSKV. A helical transmembrane segment spans residues 158–178; that stretch reads FCSGLATAVWLLCAVNTAIHT. Residues 179–215 lie on the Extracellular side of the membrane; it reads GLMLRLDFCGPNVIIHFFCEVPPLLLLSCSSTYVNGV. The chain crosses the membrane as a helical span at residues 216 to 235; the sequence is MIVLADAFYGIVNFLMTIAS. At 236–255 the chain is on the cytoplasmic side; sequence YGFIVSSILKVKTAWGRQKA. The chain crosses the membrane as a helical span at residues 256-276; it reads FSTCSSHLTVVCMYYTAVFYA. Residues 277–289 lie on the Extracellular side of the membrane; the sequence is YISPVSGYSAGKS. A helical transmembrane segment spans residues 290 to 310; it reads KLAGLLYTVLSPTLNPLIYTL. The Cytoplasmic portion of the chain corresponds to 311-328; it reads RNKEVKAALRKLFPFFRN.

Belongs to the G-protein coupled receptor 1 family.

Its subcellular location is the cell membrane. Its function is as follows. Odorant receptor. The protein is Olfactory receptor 13A1 (OR13A1) of Homo sapiens (Human).